Consider the following 146-residue polypeptide: Hemoglobin subunit beta (146 aa).

Residues 2–146 (HWSAEEKQLI…VAHSLARVYH (145 aa)) form the Globin domain. Heme b contacts are provided by His-63 and His-92.

The protein belongs to the globin family. Heterotetramer of two alpha chains and two beta chains. As to expression, red blood cells.

Functionally, involved in oxygen transport from the lung to the various peripheral tissues. This chain is Hemoglobin subunit beta (HBB), found in Microcephalophis gracilis (Graceful small-headed sea snake).